Here is a 932-residue protein sequence, read N- to C-terminus: Potassium voltage-gated channel subfamily KQT member 5 (932 aa).

Residues 1-125 lie on the Cytoplasmic side of the membrane; that stretch reads MPRHHAGGEE…YNVLERPRGW (125 aa). Ser88 is modified (phosphoserine). Residues 126–146 form a helical membrane-spanning segment; the sequence is AFIYHAFVFLLVFGCLILSVF. The Extracellular portion of the chain corresponds to 147–156; that stretch reads STIPEHTKLA. Residues 157–177 traverse the membrane as a helical segment; that stretch reads SSCLLILEFVMIVVFGLEFII. The Cytoplasmic portion of the chain corresponds to 178–200; the sequence is RIWSAGCCCRYRGWQGRLRFARK. A helical membrane pass occupies residues 201-221; the sequence is PFCVIDTIVLIASIAVVSAKT. Residues 222 to 229 lie on the Extracellular side of the membrane; sequence QGNIFATS. A helical; Voltage-sensor membrane pass occupies residues 230–252; the sequence is ALRSLRFLQILRMVRMDRRGGTW. A 1,2-diacyl-sn-glycero-3-phospho-(1D-myo-inositol-4,5-bisphosphate) is bound by residues Arg248 and Lys264. Topologically, residues 253–266 are cytoplasmic; it reads KLLGSVVYAHSKEL. A helical membrane pass occupies residues 267–287; sequence ITAWYIGFLVLIFSSFLVYLV. Residues 288-298 are Extracellular-facing; that stretch reads EKDANKEFSTY. The segment at residues 299–319 is an intramembrane region (pore-forming); it reads ADALWWGTITLTTIGYGDKTP. Topologically, residues 320–325 are extracellular; it reads LTWLGR. The chain crosses the membrane as a helical span at residues 326–346; that stretch reads LLSAGFALLGISFFALPAGIL. The Cytoplasmic segment spans residues 347 to 932; that stretch reads GSGFALKVQE…ALSLPHVKLK (586 aa). Lys361 is an a 1,2-diacyl-sn-glycero-3-phospho-(1D-myo-inositol-4,5-bisphosphate) binding site. An interaction with CALM region spans residues 370–378; it reads AANLIQCVW. A disordered region spans residues 404–465; that stretch reads SPTKKEQGEA…GSPTKVQKSW (62 aa). Residues 431-440 show a composition bias toward polar residues; it reads RGQSIKSRQA. Ser447 bears the Phosphoserine mark. The tract at residues 521–528 is interaction with CALM; sequence VIRAIRIM. A disordered region spans residues 655-678; that stretch reads SDYQSPVDSKDLSGSAQNSGCLSR. Ser831 is modified (phosphoserine). A compositionally biased stretch (acidic residues) spans 876 to 885; sequence VGPEETETDT. Positions 876–919 are disordered; that stretch reads VGPEETETDTFDAAPQPAREAAFASDSLRTGRSRSSQSICKAGE. A compositionally biased stretch (low complexity) spans 888–899; sequence AAPQPAREAAFA. Residues 902–914 show a composition bias toward polar residues; sequence SLRTGRSRSSQSI.

It belongs to the potassium channel family. KQT (TC 1.A.1.15) subfamily. Kv7.5/KCNQ5 sub-subfamily. In terms of assembly, homotetramer; forms a functional homotetrameric channel resulting in the expression of a small M-current. Heterotetramer with KCNQ3; forms heterotetrameric M-channel responsible for the native M-current. Heterotetramer with KCNQ1; forms a functional voltage-gated potassium channel. Interacts (via C-terminus) with calmodulin/CALM1; forms a heterooctameric structure (with 4:4 KCNQ1:CALM stoichiometry); the interaction is calcium-independent, constitutive and participates in the channel function. Strongly expressed in brain and skeletal muscle. In brain, expressed in cerebral cortex, occipital pole, frontal lobe and temporal lobe. Lower levels in hippocampus and putamen. Low to undetectable levels in medulla, cerebellum and thalamus.

The protein localises to the cell membrane. The catalysed reaction is K(+)(in) = K(+)(out). Phosphatidylinositol-4,5-bisphosphate (PIP2) is essential to activate KCNQ5 channel by inducing the coupling of the voltage-sensing domain (VSD) and the pore-forming domain (PD). Calcium suppresses KCNQ5 channel current through calcium-bound CALM C-terminus. Therefore CALM acts as calcium sensor that controls channel activity. Activated by niflumic acid and the anticonvulsant retigabine. Inhibited by barium, linopirdine, XE991 and tetraethylammonium (as homomer). Insensitive to tetraethylammonium in KCNQ3-KCNQ5 heteromers. In terms of biological role, pore-forming subunit of the voltage-gated potassium (Kv) channel broadly expressed in brain and involved in the regulation of neuronal excitability. Associates with KCNQ3/Kv7.3 pore-forming subunit to form a potassium channel which contributes to M-type current, a slowly activating and deactivating potassium conductance which plays a critical role in determining the subthreshold electrical excitability of neurons. Contributes, with other potassium channels, to the molecular diversity of a heterogeneous population of M-channels, varying in kinetic and pharmacological properties, which underlie this physiologically important current. Also forms a functional channel with KCNQ1/Kv7.1 subunit that may contribute to vasoconstriction and hypertension. Channel may be selectively permeable in vitro to other cations besides potassium, in decreasing order of affinity K(+) = Rb(+) &gt; Cs(+) &gt; Na(+). Similar to the native M-channel, KCNQ3-KCNQ5 potassium channel is suppressed by activation of the muscarinic acetylcholine receptor CHRM1. The chain is Potassium voltage-gated channel subfamily KQT member 5 from Homo sapiens (Human).